The following is a 341-amino-acid chain: Tetraacyldisaccharide 4'-kinase (341 aa).

57–64 (TVGGTGKT) provides a ligand contact to ATP.

The protein belongs to the LpxK family.

The catalysed reaction is a lipid A disaccharide + ATP = a lipid IVA + ADP + H(+). It functions in the pathway glycolipid biosynthesis; lipid IV(A) biosynthesis; lipid IV(A) from (3R)-3-hydroxytetradecanoyl-[acyl-carrier-protein] and UDP-N-acetyl-alpha-D-glucosamine: step 6/6. Transfers the gamma-phosphate of ATP to the 4'-position of a tetraacyldisaccharide 1-phosphate intermediate (termed DS-1-P) to form tetraacyldisaccharide 1,4'-bis-phosphate (lipid IVA). The protein is Tetraacyldisaccharide 4'-kinase of Maricaulis maris (strain MCS10) (Caulobacter maris).